The following is an 855-amino-acid chain: Receptor-like protein kinase THESEUS 1 (855 aa).

The signal sequence occupies residues 1–22; the sequence is MVFTKSLLVLLWFLSCYTTTTS. Residues 23-415 lie on the Extracellular side of the membrane; the sequence is SALFNPPDNY…GGSGSKSKKK (393 aa). Asn-41, Asn-64, Asn-75, Asn-114, Asn-118, Asn-136, Asn-143, Asn-154, Asn-168, Asn-225, Asn-242, Asn-288, Asn-353, and Asn-376 each carry an N-linked (GlcNAc...) asparagine glycan. A helical transmembrane segment spans residues 416–436; sequence AVIIGSLVGAVTLILLIAVCC. The Cytoplasmic portion of the chain corresponds to 437-855; it reads YCCLVASRKQ…FSQLVHPRGR (419 aa). The Protein kinase domain maps to 510–783; sequence FDESSLLGVG…GDVLWNLEYA (274 aa). ATP is bound by residues 516 to 524 and Lys-538; that span reads LGVGGFGRV. Catalysis depends on Asp-634, which acts as the Proton acceptor. The disordered stretch occupies residues 822–855; sequence IDRGGVNSGTGTDDDAEDATTSAVFSQLVHPRGR.

Belongs to the protein kinase superfamily. Ser/Thr protein kinase family. Post-translationally, autophosphorylated. In terms of tissue distribution, expressed in most vegetative tissues, including leaves, stems and roots, primarily in expanding cells and vascular tissue.

The protein localises to the cell membrane. Functionally, receptor-like protein kinase required for cell elongation during vegetative growth, mostly in a brassinosteroid-(BR-) independent manner. Mediates the response of growing plant cells to the perturbation of cellulose synthesis and may act as a cell-wall-integrity sensor. Controls ectopic-lignin accumulation in cellulose-deficient mutant backgrounds. The sequence is that of Receptor-like protein kinase THESEUS 1 (THE1) from Arabidopsis thaliana (Mouse-ear cress).